The following is a 131-amino-acid chain: Fluoride-specific ion channel FluC 1 (131 aa).

3 helical membrane-spanning segments follow: residues 38–58, 69–89, and 108–128; these read FPLSTLVINGVASLCAGIAMM, TVMMFVVGFLGGFSTFSTALN, and IATVAVPLICVAAGFGIALLA. Glycine 79 and serine 82 together coordinate Na(+).

It belongs to the fluoride channel Fluc/FEX (TC 1.A.43) family.

Its subcellular location is the cell membrane. It catalyses the reaction fluoride(in) = fluoride(out). With respect to regulation, na(+) is not transported, but it plays an essential structural role and its presence is essential for fluoride channel function. Functionally, fluoride-specific ion channel. Important for reducing fluoride concentration in the cell, thus reducing its toxicity. This Bifidobacterium longum (strain NCC 2705) protein is Fluoride-specific ion channel FluC 1.